Consider the following 166-residue polypeptide: Endoribonuclease YbeY (166 aa).

His111, His115, and His121 together coordinate Zn(2+). Residues 141 to 166 (LGYPDPYAEDESADHPHSDTPSKDHE) are disordered. The segment covering 153-166 (ADHPHSDTPSKDHE) has biased composition (basic and acidic residues).

Belongs to the endoribonuclease YbeY family. Zn(2+) serves as cofactor.

Its subcellular location is the cytoplasm. In terms of biological role, single strand-specific metallo-endoribonuclease involved in late-stage 70S ribosome quality control and in maturation of the 3' terminus of the 16S rRNA. This chain is Endoribonuclease YbeY, found in Pseudomonas savastanoi pv. phaseolicola (strain 1448A / Race 6) (Pseudomonas syringae pv. phaseolicola (strain 1448A / Race 6)).